A 408-amino-acid polypeptide reads, in one-letter code: Pleckstrin homology domain-containing family O member 1 (408 aa).

The segment at 1 to 21 is disordered; that stretch reads MKKSGSGKRGPPDGNHQSAAP. The PH domain occupies 20–131; the sequence is APEKVGWVRK…WINALSSAIT (112 aa). Residues 132–192 form an interaction with capping proteins (CPs) region; that stretch reads RAKNRILDEV…MLTLDLIQEE (61 aa). An interaction with ATM, CKIP, IFP35 and NMI region spans residues 135 to 307; sequence NRILDEVTVE…PAQPGQLSRI (173 aa). The tract at residues 217–264 is disordered; it reads LAGSRRRADSDRIQPSSQRASSLSRPWEKPDKGAPYTPQALKKFPSTE. The residue at position 226 (serine 226) is a Phosphoserine. Over residues 229–240 the composition is skewed to polar residues; that stretch reads IQPSSQRASSLS. A phosphoserine mark is found at serine 270 and serine 341. The tract at residues 307-408 is negative regulator of AP-1 activity; the sequence is IQDLVARKLE…QHSQYRKSLM (102 aa). Disordered regions lie at residues 325 to 348 and 389 to 408; these read VQGLGDGKRKAKDPPQSPPDSESE and TPDSHLRQTSQHSQYRKSLM. A compositionally biased stretch (polar residues) spans 389–401; the sequence is TPDSHLRQTSQHS.

Heterodimer or homodimer. Interacts with CK2 and actin capping subunits (capping protein CP-alpha and CP-beta). CKIP1 and CK2 together inhibit the activity of actin capping protein at the barbed ends of actin filaments. Interacts with ATM, IFP35, JUN, JUND, NMI and PI3K. Interacts with AKT1, AKT2 and AKT3 (each isozyme of PKB), PtdIns(3,5)P2, PtdIns(4,5)P2 and PtdIns(3,4,5)P2. Post-translationally, C-terminal fragments could be released during apoptosis via caspase-3-dependent cleavage.

The protein localises to the cell membrane. The protein resides in the nucleus. It is found in the cytoplasm. Functionally, plays a role in the regulation of the actin cytoskeleton through its interactions with actin capping protein (CP). May function to target CK2 to the plasma membrane thereby serving as an adapter to facilitate the phosphorylation of CP by protein kinase 2 (CK2). Appears to target ATM to the plasma membrane. Appears to also inhibit tumor cell growth by inhibiting AKT-mediated cell-survival. Also implicated in PI3K-regulated muscle differentiation, the regulation of AP-1 activity (plasma membrane bound AP-1 regulator that translocates to the nucleus) and the promotion of apoptosis induced by tumor necrosis factor TNF. When bound to PKB, it inhibits it probably by decreasing PKB level of phosphorylation. This is Pleckstrin homology domain-containing family O member 1 (Plekho1) from Mus musculus (Mouse).